Consider the following 384-residue polypeptide: Alanine racemase (384 aa).

Lys-39 functions as the Proton acceptor; specific for D-alanine in the catalytic mechanism. Lys-39 carries the post-translational modification N6-(pyridoxal phosphate)lysine. Arg-138 is a binding site for substrate. The active-site Proton acceptor; specific for L-alanine is the Tyr-265. Substrate is bound at residue Met-312.

The protein belongs to the alanine racemase family. Pyridoxal 5'-phosphate is required as a cofactor.

It carries out the reaction L-alanine = D-alanine. Its pathway is amino-acid biosynthesis; D-alanine biosynthesis; D-alanine from L-alanine: step 1/1. In terms of biological role, catalyzes the interconversion of L-alanine and D-alanine. May also act on other amino acids. This is Alanine racemase (alr) from Staphylococcus carnosus (strain TM300).